Consider the following 95-residue polypeptide: Aspartyl/glutamyl-tRNA(Asn/Gln) amidotransferase subunit C (95 aa).

It belongs to the GatC family. In terms of assembly, heterotrimer of A, B and C subunits.

It catalyses the reaction L-glutamyl-tRNA(Gln) + L-glutamine + ATP + H2O = L-glutaminyl-tRNA(Gln) + L-glutamate + ADP + phosphate + H(+). It carries out the reaction L-aspartyl-tRNA(Asn) + L-glutamine + ATP + H2O = L-asparaginyl-tRNA(Asn) + L-glutamate + ADP + phosphate + 2 H(+). Functionally, allows the formation of correctly charged Asn-tRNA(Asn) or Gln-tRNA(Gln) through the transamidation of misacylated Asp-tRNA(Asn) or Glu-tRNA(Gln) in organisms which lack either or both of asparaginyl-tRNA or glutaminyl-tRNA synthetases. The reaction takes place in the presence of glutamine and ATP through an activated phospho-Asp-tRNA(Asn) or phospho-Glu-tRNA(Gln). The protein is Aspartyl/glutamyl-tRNA(Asn/Gln) amidotransferase subunit C of Geotalea daltonii (strain DSM 22248 / JCM 15807 / FRC-32) (Geobacter daltonii).